A 343-amino-acid chain; its full sequence is Mediator of RNA polymerase II transcription subunit 2 (343 aa).

Disordered regions lie at residues 105 to 141 (KQQQ…AQQL) and 252 to 277 (STNE…ISSN). The span at 107-132 (QQEEEQRRKHQAELEKNKRQQEHDAA) shows a compositional bias: basic and acidic residues. Residues 252-264 (STNEASTNNRNND) show a composition bias toward polar residues.

It belongs to the Mediator complex subunit 2 family. Component of the Mediator complex.

The protein resides in the nucleus. Its function is as follows. Component of the Mediator complex, a coactivator involved in the regulated transcription of nearly all RNA polymerase II-dependent genes. Mediator functions as a bridge to convey information from gene-specific regulatory proteins to the basal RNA polymerase II transcription machinery. Mediator is recruited to promoters by direct interactions with regulatory proteins and serves as a scaffold for the assembly of a functional preinitiation complex with RNA polymerase II and the general transcription factors. This Eremothecium gossypii (strain ATCC 10895 / CBS 109.51 / FGSC 9923 / NRRL Y-1056) (Yeast) protein is Mediator of RNA polymerase II transcription subunit 2 (MED2).